We begin with the raw amino-acid sequence, 466 residues long: 55 kDa erythrocyte membrane protein (466 aa).

Thr2 is modified (N-acetylthreonine). 2 positions are modified to phosphoserine: Ser13 and Ser19. Thr49 carries the post-translational modification Phosphothreonine. 3 positions are modified to phosphoserine: Ser52, Ser57, and Ser110. The PDZ domain occupies 71–152 (LIQIEKVTEE…MISLKVIPNQ (82 aa)). The SH3 domain maps to 158-228 (ALQMFMRAQF…PSPELQEWRV (71 aa)). Ser243 is modified (phosphoserine). The interval 268–466 (VVSYEEVVRL…PQWVPVSWVY (199 aa)) is interaction with PALS1. One can recognise a Guanylate kinase-like domain in the interval 282-451 (RKTLVLIGAS…TLKKLQEAFD (170 aa)).

The protein belongs to the MAGUK family. As to quaternary structure, heterodimer with PALS1. Interacts with DLG5 and NF2. Interacts (via guanylate kinase-like domain) with WHRN (via third PDZ domain). Palmitoylated.

It localises to the cell membrane. Its subcellular location is the cell projection. The protein resides in the stereocilium. Functionally, essential regulator of neutrophil polarity. Regulates neutrophil polarization by regulating AKT1 phosphorylation through a mechanism that is independent of PIK3CG activity. This is 55 kDa erythrocyte membrane protein (MPP1) from Papio anubis (Olive baboon).